We begin with the raw amino-acid sequence, 566 residues long: MLMKVSQFFLATVKETPADAVLASHQLMIRAGMLRKLASGLYTWLPLGLRVLQKVADVVREEMNRAGALELLMPIVQPASLWQESGRWEAYGAELLRIMDRHQNGFCFGPTHEEVITDIARQELKSYKQLPLNFYQIQTKFRDEIRPRFGVMRSREFLMKDAYSFDLDEKGMQAAYEKMFDAYRRIFTRLGLNFRAVLADTGAIGGDYSHEFQVLADVGEDTVVYSDESDYAANIEKAAAQAPQGERVKPVAEMKKIATPGVRTIKQLADKANILPEKGVKTLIVKGDESSLIALILRGDHELNDVKAQHLPGVAFPLQFADEKEIREAIGCGPGSLGPVNLPIPFIVDRDAAQLVDFSCGANEDDFHWINVNWERDVPLGSVADIRKVVEGDISPDGKGRLRFARGIEVGQVFQLGDKYSRKMNATVVDELGKSRYLQMGCYGIGVSRTVAAAIEQNHDERGIIWPMPMAPFFIALVPVNMHKSYRVREACEKLYNELIDAGYEVLWDDRKERPGVMFADMDLIGIPHRLVISESGLDRGIVEYKARKSKEAENVSLENVLSVFR.

Belongs to the class-II aminoacyl-tRNA synthetase family. ProS type 1 subfamily. In terms of assembly, homodimer.

The protein localises to the cytoplasm. It catalyses the reaction tRNA(Pro) + L-proline + ATP = L-prolyl-tRNA(Pro) + AMP + diphosphate. In terms of biological role, catalyzes the attachment of proline to tRNA(Pro) in a two-step reaction: proline is first activated by ATP to form Pro-AMP and then transferred to the acceptor end of tRNA(Pro). As ProRS can inadvertently accommodate and process non-cognate amino acids such as alanine and cysteine, to avoid such errors it has two additional distinct editing activities against alanine. One activity is designated as 'pretransfer' editing and involves the tRNA(Pro)-independent hydrolysis of activated Ala-AMP. The other activity is designated 'posttransfer' editing and involves deacylation of mischarged Ala-tRNA(Pro). The misacylated Cys-tRNA(Pro) is not edited by ProRS. This Coxiella burnetii (strain RSA 493 / Nine Mile phase I) protein is Proline--tRNA ligase.